Reading from the N-terminus, the 62-residue chain is MKTAEIKGLSVEDLKQRIVAEKENLHKLKFAHAISPIENPMKISHTRKLIAQLSTELTAKSK.

Belongs to the universal ribosomal protein uL29 family.

This is Large ribosomal subunit protein uL29 from Cytophaga hutchinsonii (strain ATCC 33406 / DSM 1761 / CIP 103989 / NBRC 15051 / NCIMB 9469 / D465).